The following is a 72-amino-acid chain: Translation initiation factor IF-1 (72 aa).

The 72-residue stretch at 1–72 (MSKDDSIEFE…TKGRITYRMK (72 aa)) folds into the S1-like domain.

Belongs to the IF-1 family. In terms of assembly, component of the 30S ribosomal translation pre-initiation complex which assembles on the 30S ribosome in the order IF-2 and IF-3, IF-1 and N-formylmethionyl-tRNA(fMet); mRNA recruitment can occur at any time during PIC assembly.

It localises to the cytoplasm. Its function is as follows. One of the essential components for the initiation of protein synthesis. Stabilizes the binding of IF-2 and IF-3 on the 30S subunit to which N-formylmethionyl-tRNA(fMet) subsequently binds. Helps modulate mRNA selection, yielding the 30S pre-initiation complex (PIC). Upon addition of the 50S ribosomal subunit IF-1, IF-2 and IF-3 are released leaving the mature 70S translation initiation complex. This is Translation initiation factor IF-1 from Xanthomonas campestris pv. campestris (strain 8004).